Reading from the N-terminus, the 225-residue chain is Germin-like protein 8-6 (225 aa).

The first 23 residues, 1–23 (MASPSSLCLLTALLALVSWQTIA), serve as a signal peptide directing secretion. Cysteines 33 and 48 form a disulfide. A Cupin type-1 domain is found at 63–213 (AMLDTPRKTN…AFQVEKGTID (151 aa)). The N-linked (GlcNAc...) asparagine glycan is linked to N77. Residues H110, H112, and E117 each coordinate Mn(2+). The N-linked (GlcNAc...) asparagine glycan is linked to N136. Residue H158 coordinates Mn(2+).

The protein belongs to the germin family. As to quaternary structure, oligomer (believed to be a pentamer but probably hexamer).

The protein resides in the secreted. Its subcellular location is the extracellular space. It localises to the apoplast. Functionally, plays a role in broad-spectrum disease resistance. Probably has no oxalate oxidase activity even if the active site is conserved. The sequence is that of Germin-like protein 8-6 from Oryza sativa subsp. japonica (Rice).